The sequence spans 417 residues: Succinate--CoA ligase [ADP-forming] subunit beta, mitochondrial (417 aa).

The transit peptide at 1–24 (MLRKLANQSLSVAGKWQQQQLRRL) directs the protein to the mitochondrion. The region spanning 32–275 (AELMSKYGIN…SSQEDPREVA (244 aa)) is the ATP-grasp domain. ATP-binding positions include K71, 78–80 (GRG), and E138. Residues N230 and D244 each coordinate Mg(2+). Residues N295 and 352–354 (GIM) contribute to the substrate site.

Belongs to the succinate/malate CoA ligase beta subunit family. Heterodimer of an alpha and a beta subunit. Requires Mg(2+) as cofactor. In terms of tissue distribution, expressed in roots, stems, flowers, leaves and fruits.

It is found in the mitochondrion. It carries out the reaction succinate + ATP + CoA = succinyl-CoA + ADP + phosphate. The protein operates within carbohydrate metabolism; tricarboxylic acid cycle; succinate from succinyl-CoA (ligase route): step 1/1. Succinyl-CoA synthetase functions in the citric acid cycle (TCA), coupling the hydrolysis of succinyl-CoA to the synthesis of ATP and thus represents the only step of substrate-level phosphorylation in the TCA. The beta subunit provides nucleotide specificity of the enzyme and binds the substrate succinate, while the binding sites for coenzyme A and phosphate are found in the alpha subunit. The chain is Succinate--CoA ligase [ADP-forming] subunit beta, mitochondrial from Solanum lycopersicum (Tomato).